Here is a 114-residue protein sequence, read N- to C-terminus: Cystatin Pr15a (114 aa).

Positions 1 to 22 (MFTVKLLAFMVVAVSLQHLAEA) are cleaved as a signal peptide. Residues 29–83 (GCPVEVDPNREDIKKSLAHVMAAKNSPDELVRIIKASTQVVNGIKYKVVFEVKNP) enclose the Cystatin domain.

Belongs to the cystatin family. In terms of tissue distribution, expressed by the venom gland (anterior main gland) (at protein level).

The protein resides in the secreted. This chain is Cystatin Pr15a, found in Platymeris rhadamanthus (Red spot assassin bug).